A 641-amino-acid chain; its full sequence is Tegument protein UL35 (641 aa).

Disordered stretches follow at residues 353–373, 500–572, and 587–641; these read ERGE…PREA, ASSS…PRQR, and AYSH…LRHL. The segment covering 358-367 has biased composition (acidic residues); that stretch reads GDEDEEQEND. Over residues 500–563 the composition is skewed to low complexity; sequence ASSSSASSSS…LSGSHGISSA (64 aa). The segment covering 589–599 has biased composition (basic residues); the sequence is SHHRRHRRRRS. Positions 632 to 641 are enriched in basic and acidic residues; that stretch reads DDLAENLRHL.

Belongs to the herpesviridae pp85 family. In terms of assembly, interacts with UL82. Interacts with isoform UL35A. Interacts with host UBP7; this interaction significantly inhibits the ability of USP7 to form nuclear bodies. Interacts with host DCAF1 (via C-terminus). Interacts with host SNX5; this interaction allows proper gB localization during viral assembly. Interacts with host TBK1; this interaction prevents type I interferon production. Interacts with UL82. Interacts with isoform UL35. Interacts with host UBP7; this interaction significantly inhibits the ability of USP7 to form nuclear bodies. Interacts with host SNX5; this interaction allows proper gB localization during viral assembly.

Its subcellular location is the virion tegument. The protein localises to the host nucleus. It is found in the host cytoplasm. Its function is as follows. Plays important role in immediate-early gene expression through interaction with UL82. Forms nuclear bodies in host nucleus, independently of PML. In turn, UL35 nuclear bodies associate with and remodel PML bodies. Through interaction with host DCAF1, causes cells to accumulate in the G2 phase of the cell cycle by inducing a DNA damage response. Regulates viral assembly by controlling the localization of the essential gB through regulation of a retrograde transport pathway. This modulation occurs via binding and inhibition of host sorting nexin 5/SNX5. Also plays a role in the inhibition of pattern recognition receptor-mediated type I interferon signaling at the level of TBK1. Functionally, promotes cytoplasmic UL82 accumulation and inhibits UL35-containing nuclear bodies formation. Regulates viral assembly by controlling the localization of the essential gB through regulation of a retrograde transport pathway. This modulation occurs via binding and inhibition of host sorting nexin 5/SNX5. The sequence is that of Tegument protein UL35 (UL35) from Homo sapiens (Human).